Reading from the N-terminus, the 317-residue chain is Methionyl-tRNA formyltransferase (317 aa).

A (6S)-5,6,7,8-tetrahydrofolate-binding site is contributed by S112–P115.

It belongs to the Fmt family.

The catalysed reaction is L-methionyl-tRNA(fMet) + (6R)-10-formyltetrahydrofolate = N-formyl-L-methionyl-tRNA(fMet) + (6S)-5,6,7,8-tetrahydrofolate + H(+). Functionally, attaches a formyl group to the free amino group of methionyl-tRNA(fMet). The formyl group appears to play a dual role in the initiator identity of N-formylmethionyl-tRNA by promoting its recognition by IF2 and preventing the misappropriation of this tRNA by the elongation apparatus. The protein is Methionyl-tRNA formyltransferase of Mesorhizobium japonicum (strain LMG 29417 / CECT 9101 / MAFF 303099) (Mesorhizobium loti (strain MAFF 303099)).